Consider the following 645-residue polypeptide: Sodium/potassium/calcium exchanger 3 (645 aa).

An N-terminal signal peptide occupies residues methionine 1–arginine 43. The Extracellular portion of the chain corresponds to glutamate 44–glutamine 106. N-linked (GlcNAc...) asparagine glycans are attached at residues asparagine 70 and asparagine 85. A helical transmembrane segment spans residues glycine 107–cysteine 127. The Cytoplasmic portion of the chain corresponds to aspartate 128–alanine 151. The Alpha-1 repeat unit spans residues valine 148–phenylalanine 188. Residues threonine 152–isoleucine 172 form a helical membrane-spanning segment. Topologically, residues threonine 173–threonine 181 are extracellular. Residues isoleucine 182–glycine 202 traverse the membrane as a helical segment. At glutamine 203–serine 209 the chain is on the cytoplasmic side. The chain crosses the membrane as a helical span at residues tryptophan 210–isoleucine 230. Topologically, residues tyrosine 231–lysine 234 are extracellular. The chain crosses the membrane as a helical span at residues valine 235 to lysine 255. The Cytoplasmic segment spans residues tyrosine 256–threonine 486. Phosphoserine is present on serine 307. 2 disordered regions span residues threonine 379 to arginine 398 and alanine 404 to proline 442. The segment covering alanine 404–glycine 435 has biased composition (acidic residues). Residues leucine 487–leucine 507 form a helical membrane-spanning segment. Residues glycine 508–valine 512 lie on the Extracellular side of the membrane. A helical transmembrane segment spans residues isoleucine 513–isoleucine 533. An Alpha-2 repeat occupies alanine 520–asparagine 551. The Cytoplasmic segment spans residues valine 534 to asparagine 551. The helical transmembrane segment at valine 552–tyrosine 572 threads the bilayer. The Extracellular portion of the chain corresponds to glycine 573–glycine 582. Residues leucine 583–leucine 603 form a helical membrane-spanning segment. Residues asparagine 604–leucine 617 are Cytoplasmic-facing. A helical membrane pass occupies residues phenylalanine 618–valine 638. Residues asparagine 639–aspartate 645 are Extracellular-facing.

This sequence belongs to the Ca(2+):cation antiporter (CaCA) (TC 2.A.19) family. SLC24A subfamily. Abundant in the brain. Highest levels found in selected thalamic nuclei, hippocampal CA1 neurons and in layer IV of the cerebral cortex. Expressed in dental tissues.

It is found in the cell membrane. It carries out the reaction Ca(2+)(out) + K(+)(out) + 4 Na(+)(in) = Ca(2+)(in) + K(+)(in) + 4 Na(+)(out). In terms of biological role, calcium, potassium:sodium antiporter that transports 1 Ca(2+) and 1 K(+) in exchange for 4 Na(+). The chain is Sodium/potassium/calcium exchanger 3 (Slc24a3) from Mus musculus (Mouse).